Reading from the N-terminus, the 123-residue chain is uncharacterized protein (123 aa).

Residues 89–123 (GVGGRKLGSEGQSLSENSEQRSLMRWGCGGSSERR) form a disordered region. Residues 98–109 (EGQSLSENSEQR) are compositionally biased toward polar residues.

This is an uncharacterized protein from Encephalitozoon cuniculi (strain GB-M1) (Microsporidian parasite).